We begin with the raw amino-acid sequence, 256 residues long: Pimeloyl-[acyl-carrier protein] methyl ester esterase (256 aa).

An AB hydrolase-1 domain is found at 15–242; sequence HLVLLHGWGL…AAHAPFISHP (228 aa). Substrate-binding positions include tryptophan 22, 82–83, and 143–147; these read SL and FLALQ. The active-site Nucleophile is the serine 82. Catalysis depends on residues aspartate 207 and histidine 235. Histidine 235 lines the substrate pocket.

It belongs to the AB hydrolase superfamily. Carboxylesterase BioH family. In terms of assembly, monomer.

It is found in the cytoplasm. The catalysed reaction is 6-carboxyhexanoyl-[ACP] methyl ester + H2O = 6-carboxyhexanoyl-[ACP] + methanol + H(+). It participates in cofactor biosynthesis; biotin biosynthesis. Functionally, the physiological role of BioH is to remove the methyl group introduced by BioC when the pimeloyl moiety is complete. It allows to synthesize pimeloyl-ACP via the fatty acid synthetic pathway through the hydrolysis of the ester bonds of pimeloyl-ACP esters. The sequence is that of Pimeloyl-[acyl-carrier protein] methyl ester esterase from Salmonella choleraesuis (strain SC-B67).